The following is a 316-amino-acid chain: MLP-like protein 34 (316 aa).

It belongs to the MLP family.

In Arabidopsis thaliana (Mouse-ear cress), this protein is MLP-like protein 34 (MLP34).